We begin with the raw amino-acid sequence, 254 residues long: Putative ankyrin-containing lipoprotein Lxx09580 (254 aa).

An N-terminal signal peptide occupies residues Met-1 to Gly-22. The N-palmitoyl cysteine moiety is linked to residue Cys-23. A lipid anchor (S-diacylglycerol cysteine) is attached at Cys-23. ANK repeat units lie at residues Ala-56–Asp-85, Gly-89–Ala-118, Ile-122–Ala-151, Phe-155–His-184, and Pro-188–Ile-222.

The protein resides in the cell membrane. The polypeptide is Putative ankyrin-containing lipoprotein Lxx09580 (Leifsonia xyli subsp. xyli (strain CTCB07)).